Reading from the N-terminus, the 205-residue chain is Regulator of G-protein signaling 4 (205 aa).

S-palmitoyl cysteine attachment occurs at residues C2, C12, and C95. Positions 62-178 constitute an RGS domain; that stretch reads SLENLISHEC…LKSRFYLDLV (117 aa).

Palmitoylated on Cys-2 and/or Cys-12. In terms of processing, phosphorylated by cyclic GMP-dependent protein kinase. As to expression, expressed in brain and heart. Expressed in brain at protein level. Expressed in prefontal and visual cortex. Isoform 4 and isoform 5 are expressed ubiquitously. Isoform 1, isoform 2 and isoform 3 are not expressed in the cerebellum.

Inhibits signal transduction by increasing the GTPase activity of G protein alpha subunits thereby driving them into their inactive GDP-bound form. Activity on G(z)-alpha is inhibited by phosphorylation of the G-protein. Activity on G(z)-alpha and G(i)-alpha-1 is inhibited by palmitoylation of the G-protein. This is Regulator of G-protein signaling 4 (RGS4) from Homo sapiens (Human).